A 463-amino-acid chain; its full sequence is Asparagine--tRNA ligase (463 aa).

Belongs to the class-II aminoacyl-tRNA synthetase family. As to quaternary structure, homodimer.

It localises to the cytoplasm. The enzyme catalyses tRNA(Asn) + L-asparagine + ATP = L-asparaginyl-tRNA(Asn) + AMP + diphosphate + H(+). This Desulfitobacterium hafniense (strain Y51) protein is Asparagine--tRNA ligase.